Here is a 300-residue protein sequence, read N- to C-terminus: Enoyl-CoA hydratase domain-containing protein 3, mitochondrial (300 aa).

The N-terminal 66 residues, 1–66, are a transit peptide targeting the mitochondrion; sequence MAVVAGLRAF…RNIVLSNPRR (66 aa). Positions 34-53 are disordered; the sequence is GSAGPAGSESEPRLTSTRQQ. An N6-succinyllysine modification is found at Lys-110.

The protein belongs to the enoyl-CoA hydratase/isomerase family.

The protein localises to the mitochondrion. May play a role in fatty acid biosynthesis and insulin sensitivity. This is Enoyl-CoA hydratase domain-containing protein 3, mitochondrial from Mus musculus (Mouse).